A 194-amino-acid polypeptide reads, in one-letter code: Fe/S biogenesis protein NfuA (194 aa).

[4Fe-4S] cluster contacts are provided by cysteine 152 and cysteine 155.

It belongs to the NfuA family. As to quaternary structure, homodimer. [4Fe-4S] cluster serves as cofactor.

Involved in iron-sulfur cluster biogenesis. Binds a 4Fe-4S cluster, can transfer this cluster to apoproteins, and thereby intervenes in the maturation of Fe/S proteins. Could also act as a scaffold/chaperone for damaged Fe/S proteins. This chain is Fe/S biogenesis protein NfuA, found in Azotobacter vinelandii (strain DJ / ATCC BAA-1303).